A 996-amino-acid chain; its full sequence is Disabled homolog 2-interacting protein (996 aa).

In terms of domain architecture, C2 spans M1 to Y118. The 209-residue stretch at G194–I402 folds into the Ras-GAP domain. The segment at L453 to L750 is necessary for interaction with AKT1. Residues L460–A475 are compositionally biased toward polar residues. 2 disordered regions span residues L460–S486 and R522–Q545. Positions S476–S486 are enriched in low complexity. The segment covering R522–E538 has biased composition (polar residues). Phosphoserine; by MAP3K5 and RIPK1 is present on S535. Position 554 is a phosphoserine (S554). Disordered regions lie at residues V611 to L630, P650 to E672, S702 to A805, E822 to E841, and R971 to C996. A compositionally biased stretch (low complexity) spans E659–E672. A compositionally biased stretch (pro residues) spans Q726–P738. Composition is skewed to polar residues over residues M746–S762 and L774–G783. 2 positions are modified to phosphoserine: S785 and S802. Basic and acidic residues predominate over residues P830–E841. Residues H832–Y966 are a coiled coil. Over residues V974 to C996 the composition is skewed to polar residues.

In terms of assembly, on plasma membrane, exists in an inactive form complexed with TNFR1; in response to TNF-alpha, dissociates from TNFR1 complex, translocates to cytoplasm and forms part of an intracellular signaling complex comprising TRADD, RIPK1, TRAF2 and MAP3K5. Interacts (via NPXY motif) with DAB2 (via PID domain). Interacts (via PH domain) with ERN1. Part of a cytoplasmic complex made of HIPK1, DAB2IP and MAP3K5 in response to TNF-alpha; this complex formation promotes MAP3K5-JNK activation and subsequent apoptosis. Interacts (via N-terminal domain) with JAK2; the interaction occurs in a IFNG/IFN-gamma-dependent manner and inhibits JAK2 autophosphorylation activity. Interacts (via C2 domain) with GSK3B; the interaction stimulates GSK3B kinase activation. Interacts (via C2 domain) with PPP2CA. Interacts (via proline-rich motif) with a regulatory p85 subunit (via SH3 domain) of the PI3K complex; the interaction inhibits the PI3K-AKT complex activity in a TNF-alpha-dependent manner in prostate cancer (PCa) cells. Interacts with AKT1; the interaction is increased in a TNF-alpha-induced manner. Interacts (via C2 domain and active form preferentially) with KDR/VEGFR2 (tyrosine-phosphorylated active form preferentially); the interaction occurs at the late phase of VEGFA response and inhibits KDR/VEGFR2 activity. Interacts (via N-terminus C2 domain) with MAP3K5 ('Ser-966' dephosphorylated form preferentially); the interaction occurs in a TNF-alpha-induced manner. Interacts (via Ras-GAP domain) with the catalytic subunit of protein phosphatase PP2A; the interaction occurs in resting endothelial cells, is further enhanced by TNF-alpha stimulation and is required to bridge PP2A to MAP3K5. Interacts (via C-terminus PER domain) with TRAF2 (via zinc fingers); the interaction occurs in a TNF-alpha-dependent manner. Interacts with 14-3-3 proteins; the interaction occurs in a TNF-alpha-dependent manner. Interacts (via Ras-GAP domain) with RIPK1 (via kinase domain); the interaction occurs in a TNF-alpha-dependent manner. Interacts with DAB1 and DAB2. Interacts with RAB40C; acts as a GAP for RAB40C. In terms of processing, in response to TNF-alpha-induction, phosphorylated at Ser-535; phosphorylation leads to a conformational change, and thus, increases its association with 14-3-3 proteins, MAP3K5, RIPK1 and TRAF2 in endothelial cells; also stimulates regulatory p85 subunit sequestring and PI3K-p85 complex activity inhibition. As to expression, expressed in brain, lung, thymus, bladder and skeletal muscle. Up-regulatedd during prostate degeneration.

The protein resides in the cytoplasm. Its subcellular location is the cell membrane. It is found in the membrane. The protein localises to the cell projection. It localises to the dendrite. Functionally, functions as a scaffold protein implicated in the regulation of a large spectrum of both general and specialized signaling pathways. Involved in several processes such as innate immune response, inflammation and cell growth inhibition, apoptosis, cell survival, angiogenesis, cell migration and maturation. Also plays a role in cell cycle checkpoint control; reduces G1 phase cyclin levels resulting in G0/G1 cell cycle arrest. Mediates signal transduction by receptor-mediated inflammatory signals, such as the tumor necrosis factor (TNF), interferon (IFN) or lipopolysaccharide (LPS). Modulates the balance between phosphatidylinositol 3-kinase (PI3K)-AKT-mediated cell survival and apoptosis stimulated kinase (MAP3K5)-JNK signaling pathways; sequesters both AKT1 and MAP3K5 and counterbalances the activity of each kinase by modulating their phosphorylation status in response to pro-inflammatory stimuli. Acts as a regulator of the endoplasmic reticulum (ER) unfolded protein response (UPR) pathway; specifically involved in transduction of the ER stress-response to the JNK cascade through ERN1. Mediates TNF-alpha-induced apoptosis activation by facilitating dissociation of inhibitor 14-3-3 from MAP3K5; recruits the PP2A phosphatase complex which dephosphorylates MAP3K5 on 'Ser-966', leading to the dissociation of 13-3-3 proteins and activation of the MAP3K5-JNK signaling pathway in endothelial cells. Acts a negative regulator in the IFN-gamma-mediated JAK-STAT signaling cascade by inhibiting smooth muscle cell (VSMCs) proliferation and intimal expansion, and thus, prevents graft arteriosclerosis (GA). Acts as a GTPase-activating protein (GAP) for the ADP ribosylation factor 6 (ARF6). Promotes hydrolysis of the ARF6-bound GTP and thus, negatively regulates phosphatidylinositol 4,5-bisphosphate (PIP2)-dependent TLR4-TIRAP-MyD88 and NF-kappa-B signaling pathways in endothelial cells in response to lipopolysaccharides (LPS). Binds specifically to phosphatidylinositol 4-phosphate (PtdIns4P) and phosphatidylinositol 3-phosphate (PtdIns3P). In response to vascular endothelial growth factor (VEGFA), acts as a negative regulator of the VEGFR2-PI3K-mediated angiogenic signaling pathway by inhibiting endothelial cell migration and tube formation. In the developing brain, promotes both the transition from the multipolar to the bipolar stage and the radial migration of cortical neurons from the ventricular zone toward the superficial layer of the neocortex in a glial-dependent locomotion process. Probable downstream effector of the Reelin signaling pathway; promotes Purkinje cell (PC) dendrites development and formation of cerebellar synapses. Also functions as a tumor suppressor protein in prostate cancer progression; prevents cell proliferation and epithelial-to-mesenchymal transition (EMT) through activation of the glycogen synthase kinase-3 beta (GSK3B)-induced beta-catenin and inhibition of PI3K-AKT and Ras-MAPK survival downstream signaling cascades, respectively. Mediates TNF/TRAF2-induced MAP3K5-JNK activation, while it inhibits CHUK-NF-kappa-B signaling. Functions as a Ras GTPase-activating protein. May act as a tumor suppressor gene. This chain is Disabled homolog 2-interacting protein (Dab2ip), found in Rattus norvegicus (Rat).